Here is a 510-residue protein sequence, read N- to C-terminus: Probable inositol 3-phosphate synthase isozyme 3 (510 aa).

This sequence belongs to the myo-inositol 1-phosphate synthase family. NAD(+) serves as cofactor. Expressed in siliques, leaves, roots, seed endosperm, but not in embryos. Highest expression in roots. Confined to vascular tissue and hydathodes of leaves.

It is found in the cytoplasm. It carries out the reaction D-glucose 6-phosphate = 1D-myo-inositol 3-phosphate. The protein operates within polyol metabolism; myo-inositol biosynthesis; myo-inositol from D-glucose 6-phosphate: step 1/2. Its function is as follows. Key enzyme in myo-inositol biosynthesis pathway that catalyzes the conversion of glucose 6-phosphate to 1-myo-inositol 1-phosphate in a NAD-dependent manner. This is Probable inositol 3-phosphate synthase isozyme 3 (IPS3) from Arabidopsis thaliana (Mouse-ear cress).